Consider the following 251-residue polypeptide: Regulator of G-protein signaling 9-binding protein B (251 aa).

Topologically, residues 1–230 (MPLQNVKVAD…NSKGCCSDGQ (230 aa)) are cytoplasmic. 2 coiled-coil regions span residues 52-94 (HLRD…ELER) and 158-187 (ANKA…MKVN). Residues 231 to 250 (LIVFLLLCGTALVAITLYSI) traverse the membrane as a helical; Anchor for type IV membrane protein segment. Residue leucine 251 is a topological domain, extracellular.

The protein belongs to the RGS7BP/RGS9BP family.

Its subcellular location is the membrane. Regulator of G protein-coupled receptor (GPCR) signaling. Probably acts by regulating the activity of some 'R7' family protein (RGS6, RGS7, RGS9 and/or RGS11). This chain is Regulator of G-protein signaling 9-binding protein B (rgs9bp-b), found in Xenopus laevis (African clawed frog).